The sequence spans 289 residues: MAEECSGNCDSCGSSSDCSDTKKMMEQQNAQIRDNMSKIKYKIAVMSGKGGVGKSTVTVNLAATLNMMGYKVGVLDGDIHGPNIPQMLGVDQIQPMADENGIYPVSTPQGIKTMSIGYFLPDKNTPIIWRGPKASGAIRQFLSDVNWGELDFLLIDTPPGSGDIQITTLQAIPDIDGVVIVTTPEEVSVLDARKSVSAANTLEIPIIGIVENMGGFVCPECDKVIDIFGKGGGEKAAKELNVFFLGRIPLDIKARVASDRGVPMVTMDCKASEEFKKVVNTVLERIKKE.

The segment covering 1–18 has biased composition (low complexity); the sequence is MAEECSGNCDSCGSSSDC. The segment at 1–20 is disordered; it reads MAEECSGNCDSCGSSSDCSD. An ATP-binding site is contributed by 48–55; it reads GKGGVGKS.

This sequence belongs to the Mrp/NBP35 ATP-binding proteins family. Homodimer.

Its function is as follows. Binds and transfers iron-sulfur (Fe-S) clusters to target apoproteins. Can hydrolyze ATP. The sequence is that of Iron-sulfur cluster carrier protein from Methanococcus maripaludis (strain DSM 14266 / JCM 13030 / NBRC 101832 / S2 / LL).